A 60-amino-acid chain; its full sequence is Large ribosomal subunit protein uL30 (60 aa).

This sequence belongs to the universal ribosomal protein uL30 family. In terms of assembly, part of the 50S ribosomal subunit.

The chain is Large ribosomal subunit protein uL30 from Oceanobacillus iheyensis (strain DSM 14371 / CIP 107618 / JCM 11309 / KCTC 3954 / HTE831).